The primary structure comprises 4568 residues: Dynein beta chain, flagellar outer arm (4568 aa).

A stem region spans residues 1–1880; sequence MAEDEGMTAA…QVNICDAEIA (1880 aa). 5 coiled-coil regions span residues 277–293, 1158–1175, 1372–1400, 1614–1650, and 1778–1825; these read FQRL…EAND, EEAA…RKAL, KIDV…RNYD, EACT…RVAF, and QEIN…RKKL. Residues 1144–1166 form a disordered region; the sequence is GVEEEPEYHPDQDPEEAAAKKAA. Positions 1150–1166 are enriched in basic and acidic residues; that stretch reads EYHPDQDPEEAAAKKAA. 4 AAA regions span residues 1881-2102, 2164-2385, 2493-2738, and 2841-3090; these read YSYE…TLYV, EAAH…RNFK, QYIP…ITQG, and EYNE…FRRY. Residues 1919–1926, 2202–2209, and 2530–2537 contribute to the ATP site; these read GPAGTGKT, GAAGCGKT, and GNTGTGKS. Residues 2831–2848 are a coiled coil; the sequence is LRKTLEDKLREYNESNAV. Residue 2879-2886 coordinates ATP; that stretch reads GVGGSGKQ. Coiled-coil stretches lie at residues 3106-3162, 3339-3425, and 3648-3728; these read KMLL…DELI, KRAA…RLES, and HERP…KARE. The stalk stretch occupies residues 3106-3425; it reads KMLLQLKRDD…WGAEIKRLES (320 aa). AAA regions lie at residues 3481–3711 and 3937–4172; these read LTDD…EIEE and MGRF…TANN.

It belongs to the dynein heavy chain family. In terms of assembly, consists of at least 3 heavy chains (alpha, beta and gamma), 2 intermediate chains and 8 light chains.

It is found in the cell projection. Its subcellular location is the cilium. The protein resides in the flagellum. The protein localises to the cytoplasm. It localises to the cytoskeleton. It is found in the flagellum axoneme. Force generating protein of eukaryotic cilia and flagella. Produces force towards the minus ends of microtubules. Dynein has ATPase activity; the force-producing power stroke is thought to occur on release of ADP. The polypeptide is Dynein beta chain, flagellar outer arm (ODA4) (Chlamydomonas reinhardtii (Chlamydomonas smithii)).